The following is a 140-amino-acid chain: ATP synthase epsilon chain (140 aa).

Belongs to the ATPase epsilon chain family. F-type ATPases have 2 components, CF(1) - the catalytic core - and CF(0) - the membrane proton channel. CF(1) has five subunits: alpha(3), beta(3), gamma(1), delta(1), epsilon(1). CF(0) has three main subunits: a, b and c.

The protein resides in the cell inner membrane. Functionally, produces ATP from ADP in the presence of a proton gradient across the membrane. This is ATP synthase epsilon chain from Laribacter hongkongensis (strain HLHK9).